The following is a 181-amino-acid chain: Large ribosomal subunit protein eL18 (181 aa).

This sequence belongs to the eukaryotic ribosomal protein eL18 family.

The protein localises to the cytoplasm. This is Large ribosomal subunit protein eL18 (rpl18) from Dictyostelium discoideum (Social amoeba).